We begin with the raw amino-acid sequence, 348 residues long: NADH-ubiquinone oxidoreductase chain 2 (348 aa).

11 consecutive transmembrane segments (helical) span residues 3-23 (PYVLMILISSLGLGTTLTFAS), 25-45 (HWLLAWMGLEINTLAILRLMA), 60-80 (FLTQATAAAMILFAATTNAWA), 99-119 (MMALALKVGLAPMHFWMPEVL), 122-142 (LDLTMGLILSTWQKLAPFALI), 150-170 (NPMLLTTLGLLSTLIGGWGGL), 178-196 (ILAYSSIAHMGWMIIILQY), 200-219 (LTLIALGLYIFMTSAAFLSL), 246-266 (LTLLSLGGLPPLTGFMPKWLI), 274-294 (DLPATATIMALAALLSLYFYL), and 328-348 (LMMIGALGLLPLTPTIMALFF).

It belongs to the complex I subunit 2 family.

The protein localises to the mitochondrion inner membrane. It carries out the reaction a ubiquinone + NADH + 5 H(+)(in) = a ubiquinol + NAD(+) + 4 H(+)(out). Its function is as follows. Core subunit of the mitochondrial membrane respiratory chain NADH dehydrogenase (Complex I) that is believed to belong to the minimal assembly required for catalysis. Complex I functions in the transfer of electrons from NADH to the respiratory chain. The immediate electron acceptor for the enzyme is believed to be ubiquinone. In Formosania lacustris (Oriental stream loach), this protein is NADH-ubiquinone oxidoreductase chain 2 (MT-ND2).